A 388-amino-acid polypeptide reads, in one-letter code: Chorismate synthase (388 aa).

NADP(+) is bound by residues Arg-39 and Arg-45. Residues 130–132 (RSS), 251–252 (NA), Gly-296, 311–315 (KPIPT), and Arg-337 each bind FMN.

The protein belongs to the chorismate synthase family. In terms of assembly, homotetramer. It depends on FMNH2 as a cofactor.

The catalysed reaction is 5-O-(1-carboxyvinyl)-3-phosphoshikimate = chorismate + phosphate. The protein operates within metabolic intermediate biosynthesis; chorismate biosynthesis; chorismate from D-erythrose 4-phosphate and phosphoenolpyruvate: step 7/7. Catalyzes the anti-1,4-elimination of the C-3 phosphate and the C-6 proR hydrogen from 5-enolpyruvylshikimate-3-phosphate (EPSP) to yield chorismate, which is the branch point compound that serves as the starting substrate for the three terminal pathways of aromatic amino acid biosynthesis. This reaction introduces a second double bond into the aromatic ring system. The protein is Chorismate synthase of Geobacillus sp. (strain WCH70).